Consider the following 574-residue polypeptide: Meiotically up-regulated gene 72 protein (574 aa).

The segment at 339 to 374 is disordered; that stretch reads VRAGTPQSSPNFNPAMRRSPVGAASRSPSRSTIGIS. Residue threonine 343 is modified to Phosphothreonine. A compositionally biased stretch (polar residues) spans 364-374; it reads RSPSRSTIGIS. Phosphoserine is present on serine 392. Disordered stretches follow at residues 422-451 and 495-574; these read TSPSGLNPTGRPSRFGGRVRGNPLTMNKAG and RNRR…RRMD. A compositionally biased stretch (polar residues) spans 541–554; the sequence is LYDTSRYPTRNSKP.

Its subcellular location is the cytoplasm. Has a role in meiosis. This is Meiotically up-regulated gene 72 protein (mug72) from Schizosaccharomyces pombe (strain 972 / ATCC 24843) (Fission yeast).